Reading from the N-terminus, the 149-residue chain is Calmodulin (149 aa).

An N-acetylalanine modification is found at Ala-2. 4 consecutive EF-hand domains span residues 8-43 (EQIA…LGQN), 44-79 (PTEA…KMKD), 81-116 (DSEE…LGEK), and 117-149 (LTDE…MMAK). Residues Asp-21, Asp-23, Asp-25, Ser-27, Glu-32, Asp-57, Asp-59, Asn-61, Thr-63, Glu-68, Asp-94, Asp-96, Asn-98, Tyr-100, and Asp-105 each contribute to the Ca(2+) site. Lys-116 is modified (N6,N6,N6-trimethyllysine). Ca(2+) is bound by residues Asp-130, Asp-132, Asp-134, Gln-136, and Glu-141.

The protein belongs to the calmodulin family.

Functionally, calmodulin mediates the control of a large number of enzymes, ion channels and other proteins by Ca(2+). Among the enzymes to be stimulated by the calmodulin-Ca(2+) complex are a number of protein kinases and phosphatases. The protein is Calmodulin of Mougeotia scalaris (Green alga).